The following is a 188-amino-acid chain: dCTP deaminase (188 aa).

Residues Lys111–Arg116, Thr135–Glu137, Gln156, Tyr170, Lys179, and Gln180 contribute to the dCTP site. Catalysis depends on Glu137, which acts as the Proton donor/acceptor.

This sequence belongs to the dCTP deaminase family. In terms of assembly, homotrimer.

It carries out the reaction dCTP + H2O + H(+) = dUTP + NH4(+). It functions in the pathway pyrimidine metabolism; dUMP biosynthesis; dUMP from dCTP (dUTP route): step 1/2. In terms of biological role, catalyzes the deamination of dCTP to dUTP. The sequence is that of dCTP deaminase from Rickettsia akari (strain Hartford).